A 2256-amino-acid chain; its full sequence is Death-inducer obliterator 1 (2256 aa).

The residue at position 1 (Met1) is an N-acetylmethionine. The span at 1 to 25 shows a compositional bias: basic and acidic residues; that stretch reads MDDKGHLSNEEAPKAIKPTSKEFRK. The segment at 1–256 is disordered; it reads MDDKGHLSNE…NPREAGKPKP (256 aa). Composition is skewed to polar residues over residues 48–59 and 96–119; these read SEQQPQQHNLSL and EPTS…SSEI. Ser58 and Ser112 each carry phosphoserine. Residues 128–142 show a composition bias toward basic and acidic residues; sequence LGKEHPASSEKAKGG. Over residues 143-153 the composition is skewed to acidic residues; it reads EEEEDTSDSDS. The residue at position 148 (Thr148) is a Phosphothreonine. Phosphoserine occurs at positions 149 and 151. 2 short sequence motifs (nuclear localization signal) span residues 162–170 and 182–190; these read QNRLRRKRE and QNRLRKKRR. Residues 169–178 show a composition bias toward basic and acidic residues; the sequence is REQEPVERSL. Composition is skewed to basic and acidic residues over residues 206–216 and 246–256; these read EQDRPLCKQEP and ENPREAGKPKP. Residues 265 to 319 form a PHD-type zinc finger; it reads ALYCICRQPHNNRFMICCDRCEEWFHGDCVGISEARGRLLERNGEDYICPNCTIL. Disordered stretches follow at residues 481–535, 598–624, 641–668, 778–822, 856–970, 1011–1039, and 1197–1218; these read LASR…DDRR, RPWP…ASKK, ANVP…SQIR, SRTK…PEKS, QVPS…TALS, AKPS…PPEG, and PSSA…QEEL. A compositionally biased stretch (polar residues) spans 495–506; sequence ESSTPSWASDHN. Phosphoserine is present on Ser522. The TFIIS central domain occupies 667–787; the sequence is IRQNIRRSLK…SRTKLLNESK (121 aa). Over residues 778–788 the composition is skewed to basic and acidic residues; that stretch reads SRTKLLNESKK. A compositionally biased stretch (acidic residues) spans 797 to 812; it reads PDMEDSPPVSDSEEQQ. Ser802 and Ser806 each carry phosphoserine. Composition is skewed to basic and acidic residues over residues 875-886 and 921-935; these read SKKEDFKPRHDS and QERK…DSHP. A Glycyl lysine isopeptide (Lys-Gly) (interchain with G-Cter in SUMO2) cross-link involves residue Lys876. The residue at position 886 (Ser886) is a Phosphoserine. Over residues 937–962 the composition is skewed to low complexity; that stretch reads PSSLGGLSPSSASGGSGVVTTVTMSG. Phosphoserine occurs at positions 1016, 1027, and 1035. Residues 1202–1215 are compositionally biased toward basic and acidic residues; it reads ELDKTDEKRTRLQQ. Tyr1239 bears the Phosphotyrosine mark. A disordered region spans residues 1245-1288; that stretch reads DTAATSTTPPGSPPPPPPLPEPPVLKILSSLKPGSTSTVTAPTT. A Phosphothreonine modification is found at Thr1252. Positions 1254–1267 are enriched in pro residues; it reads PGSPPPPPPLPEPP. Ser1256 is modified (phosphoserine). A compositionally biased stretch (low complexity) spans 1279–1288; that stretch reads STSTVTAPTT. The residue at position 1307 (Ser1307) is a Phosphoserine. Disordered stretches follow at residues 1320–1347, 1362–1421, 1509–1609, and 1630–2256; these read KKSF…KGED, FGQF…VAYD, SDAL…EAKE, and QKCE…AAQA. Positions 1371-1387 are enriched in acidic residues; it reads LEEEEEDDRPYDPEEEY. At Ser1514 the chain carries Phosphoserine. The segment covering 1526 to 1546 has biased composition (polar residues); that stretch reads LFSQEQQAPDPSQGAPNTNHN. Over residues 1547-1557 the composition is skewed to basic and acidic residues; the sequence is LDSRQSRDPRQ. Residues 1649-1666 show a composition bias toward low complexity; that stretch reads PTAGDGAARPAPPRRVLL. Residues 1667 to 1679 show a composition bias toward pro residues; sequence PTPPSTTFPPSFP. Positions 1699 to 1712 are enriched in polar residues; that stretch reads TFMSQETSLGSSQY. Ser1726 is subject to Phosphoserine. The segment covering 1783-1792 has biased composition (pro residues); it reads FPGPRGPVPP. Position 1848 is an omega-N-methylarginine (Arg1848). The span at 1855–1869 shows a compositional bias: basic and acidic residues; that stretch reads FEDRKDPHGEKREFQ. 7 positions are modified to asymmetric dimethylarginine: Arg1904, Arg1905, Arg1988, Arg1993, Arg2004, Arg2019, and Arg2035. 2 stretches are compositionally biased toward basic and acidic residues: residues 2081 to 2113 and 2123 to 2246; these read EFRE…KPLD and RQGR…EART.

As to quaternary structure, interacts specifically (via PHD-type zinc finger) with histone H3 that is trimethylated at 'Lys-4' (H3K4me3), histone phosphorylation at 'Thr-3' or 'Thr-6' disrupts this binding and promotes translocation of DIDO1 from chromatin to the mitotic spindle during mitosis. Ubiquitous. Expressed at intermediate levels.

The protein resides in the cytoplasm. It localises to the nucleus. The protein localises to the cytoskeleton. Its subcellular location is the spindle. Required for early embryonic stem cell development. Putative transcription factor, weakly pro-apoptotic when overexpressed. This chain is Death-inducer obliterator 1 (Dido1), found in Mus musculus (Mouse).